The chain runs to 310 residues: Coproporphyrin III ferrochelatase (310 aa).

Fe-coproporphyrin III-binding positions include Tyr13, Arg30, 46–47 (RY), Ser54, and Tyr125. Residues His183 and Glu264 each coordinate Fe(2+).

This sequence belongs to the ferrochelatase family.

It is found in the cytoplasm. The enzyme catalyses Fe-coproporphyrin III + 2 H(+) = coproporphyrin III + Fe(2+). It functions in the pathway porphyrin-containing compound metabolism; protoheme biosynthesis. Functionally, involved in coproporphyrin-dependent heme b biosynthesis. Catalyzes the insertion of ferrous iron into coproporphyrin III to form Fe-coproporphyrin III. This Geobacillus sp. (strain WCH70) protein is Coproporphyrin III ferrochelatase.